The following is a 119-amino-acid chain: Large ribosomal subunit protein uL22c (119 aa).

This sequence belongs to the universal ribosomal protein uL22 family. As to quaternary structure, part of the 50S ribosomal subunit.

The protein localises to the plastid. The protein resides in the chloroplast. Its function is as follows. This protein binds specifically to 23S rRNA. The globular domain of the protein is located near the polypeptide exit tunnel on the outside of the subunit, while an extended beta-hairpin is found that lines the wall of the exit tunnel in the center of the 70S ribosome. This Marchantia polymorpha (Common liverwort) protein is Large ribosomal subunit protein uL22c (rpl22).